The chain runs to 443 residues: tRNA modification GTPase MnmE (443 aa).

Residues arginine 23, glutamate 82, and lysine 121 each contribute to the (6S)-5-formyl-5,6,7,8-tetrahydrofolate site. One can recognise a TrmE-type G domain in the interval glycine 215–glutamine 364. Asparagine 225 lines the K(+) pocket. Residues asparagine 225–serine 230, threonine 244–threonine 250, and aspartate 269–glycine 272 contribute to the GTP site. Mg(2+) is bound at residue serine 229. K(+) contacts are provided by threonine 244, isoleucine 246, and threonine 249. Threonine 250 provides a ligand contact to Mg(2+). (6S)-5-formyl-5,6,7,8-tetrahydrofolate is bound at residue lysine 443.

The protein belongs to the TRAFAC class TrmE-Era-EngA-EngB-Septin-like GTPase superfamily. TrmE GTPase family. Homodimer. Heterotetramer of two MnmE and two MnmG subunits. K(+) serves as cofactor.

The protein localises to the cytoplasm. Functionally, exhibits a very high intrinsic GTPase hydrolysis rate. Involved in the addition of a carboxymethylaminomethyl (cmnm) group at the wobble position (U34) of certain tRNAs, forming tRNA-cmnm(5)s(2)U34. The polypeptide is tRNA modification GTPase MnmE (Chlamydia caviae (strain ATCC VR-813 / DSM 19441 / 03DC25 / GPIC) (Chlamydophila caviae)).